Reading from the N-terminus, the 170-residue chain is RNA pyrophosphohydrolase (170 aa).

A Nudix hydrolase domain is found at 6–149; it reads GFRPNVGIVI…KRDVYRRALK (144 aa). A Nudix box motif is present at residues 38–59; it reads GGIDDGETPEQAMYRELYEEVG.

Belongs to the Nudix hydrolase family. RppH subfamily. A divalent metal cation serves as cofactor.

Functionally, accelerates the degradation of transcripts by removing pyrophosphate from the 5'-end of triphosphorylated RNA, leading to a more labile monophosphorylated state that can stimulate subsequent ribonuclease cleavage. This is RNA pyrophosphohydrolase from Aliivibrio fischeri (strain ATCC 700601 / ES114) (Vibrio fischeri).